A 366-amino-acid polypeptide reads, in one-letter code: Alanine racemase (366 aa).

K40 (proton acceptor; specific for D-alanine) is an active-site residue. K40 carries the N6-(pyridoxal phosphate)lysine modification. R136 is a substrate binding site. Y263 (proton acceptor; specific for L-alanine) is an active-site residue. M310 provides a ligand contact to substrate.

The protein belongs to the alanine racemase family. Requires pyridoxal 5'-phosphate as cofactor.

It catalyses the reaction L-alanine = D-alanine. It participates in amino-acid biosynthesis; D-alanine biosynthesis; D-alanine from L-alanine: step 1/1. Catalyzes the interconversion of L-alanine and D-alanine. May also act on other amino acids. The polypeptide is Alanine racemase (alr) (Streptococcus pyogenes serotype M2 (strain MGAS10270)).